A 295-amino-acid polypeptide reads, in one-letter code: Alpha-ketoglutarate-dependent sulfate ester dioxygenase (295 aa).

His71 serves as a coordination point for substrate. Positions 98 and 100 each coordinate Fe cation. Val101 is a binding site for substrate. Thr125 contacts 2-oxoglutarate. His252 is a Fe cation binding site. 2-oxoglutarate-binding residues include Arg263 and Arg267.

The protein belongs to the TfdA dioxygenase family. Fe(2+) is required as a cofactor.

The enzyme catalyses a primary linear alkyl sulfate ester + 2-oxoglutarate + O2 = an aldehyde + sulfate + succinate + CO2 + H(+). The catalysed reaction is 2-ethylhexyl sulfate + 2-oxoglutarate + O2 = 2-ethylhexanal + sulfate + succinate + CO2 + H(+). It catalyses the reaction hexyl sulfate + 2-oxoglutarate + O2 = hexanal + sulfate + succinate + CO2 + H(+). It carries out the reaction pentyl sulfate + 2-oxoglutarate + O2 = pentanal + sulfate + succinate + CO2 + H(+). The enzyme catalyses heptyl sulfate + 2-oxoglutarate + O2 = heptanal + sulfate + succinate + CO2 + H(+). Functionally, alpha-ketoglutarate-dependent sulfate ester dioxygenase, which oxidizes medium-chain alkyl-sulfate esters. Shows preference for 2-ethylhexyl sulfate (2-EHS) in vitro, leading to the formation of succinate and 2-ethylhexanal. Has likely a role in sulfate scavenging in vivo. Also causes the inactivation of the 2-carboxyquinoxaline Ty38c (an antitubercular compound that inhibits DprE1) via oxidative decarboxylation, using Ty38c instead of alpha-ketoglutarate as a substrate. Is thus responsible for primary resistance of M.tuberculosis to Ty38c in vitro. Overexpression of Rv3406 causes resistance to Ty38c. This is Alpha-ketoglutarate-dependent sulfate ester dioxygenase from Mycobacterium tuberculosis (strain ATCC 25618 / H37Rv).